The following is a 295-amino-acid chain: sn-glycerol-3-phosphate transport system permease protein UgpA (295 aa).

At 1–11 the chain is on the cytoplasmic side; the sequence is MSSSRPVFRSR. Residues 12–32 form a helical membrane-spanning segment; sequence WLPYLLVAPQLIITVIFFIWP. Residues 33–80 are Periplasmic-facing; that stretch reads AGEALWYSLQSVDPFGFSSQFVGLDNFVTLFHDSYYLDAFWTTIKFST. Residues 76–284 form the ABC transmembrane type-1 domain; sequence IKFSTFVTVS…FLVIVLTVVQ (209 aa). Residues 81-101 traverse the membrane as a helical segment; that stretch reads FVTVSGLLVSLFFAALVEYIV. Residues 102–109 lie on the Cytoplasmic side of the membrane; sequence RGSRFYQT. Residues 110–130 form a helical membrane-spanning segment; that stretch reads LMLLPYAVAPAVAAVLWIFLF. Residues 131 to 156 are Periplasmic-facing; the sequence is NPGRGLITHFLAEFGYDWNHAQNSGQ. Residues 157–177 form a helical membrane-spanning segment; it reads AMFLVVFASVWKQISYNFLFF. Over 178–207 the chain is Cytoplasmic; the sequence is YAALQSIPRSLIEAAAIDGAGPIRRFFKIA. The chain crosses the membrane as a helical span at residues 208–228; the sequence is LPLIAPVSFFLLVVNLVYAFF. Residues 229–262 are Periplasmic-facing; that stretch reads DTFPVIDAATSGGPVQATTTLIYKIYREGFTGLD. A helical membrane pass occupies residues 263–283; the sequence is LASSAAQSVVLMFLVIVLTVV. Topologically, residues 284–295 are cytoplasmic; it reads QFRYVEGKVRYQ.

Belongs to the binding-protein-dependent transport system permease family. UgpAE subfamily. As to quaternary structure, the complex is composed of two ATP-binding proteins (UgpC), two transmembrane proteins (UgpA and UgpE) and a solute-binding protein (UgpB).

It localises to the cell inner membrane. In terms of biological role, part of the ABC transporter complex UgpBAEC involved in sn-glycerol-3-phosphate (G3P) import. Probably responsible for the translocation of the substrate across the membrane. The sequence is that of sn-glycerol-3-phosphate transport system permease protein UgpA (ugpA) from Escherichia coli O6:K15:H31 (strain 536 / UPEC).